The following is a 584-amino-acid chain: Ras-specific guanine nucleotide-releasing factor RalGPS1 (584 aa).

The segment covering 1–13 has biased composition (polar residues); sequence MDLMNGQSSSVNI. Disordered regions lie at residues 1 to 29, 285 to 338, and 380 to 407; these read MDLM…SLSD, IEPG…IPHG, and HVPS…SELS. Positions 14–26 are enriched in low complexity; it reads AATASEKSSSSES. Residues 50 to 288 enclose the Ras-GEF domain; that stretch reads TPEEYAGQIT…YKLSLKIEPG (239 aa). Residues 326–329 carry the PXXP motif; it reads PTPP. Over residues 388–404 the composition is skewed to low complexity; sequence ESSTLSSGISIGSSDGS. The 113-residue stretch at 458–570 folds into the PH domain; the sequence is AVTIQGVLRR…WFKHLSAACQ (113 aa).

It is found in the cytoplasm. It localises to the cell membrane. Functionally, guanine nucleotide exchange factor. May be involved in cytoskeletal organization. In Gallus gallus (Chicken), this protein is Ras-specific guanine nucleotide-releasing factor RalGPS1 (RALGPS1).